The following is a 292-amino-acid chain: NAD kinase (292 aa).

Residue Asp72 is the Proton acceptor of the active site. Residues Asp72–Gly73, Asn146–Glu147, His157, Arg174, Asp176, and Thr187–Ser192 each bind NAD(+).

This sequence belongs to the NAD kinase family. It depends on a divalent metal cation as a cofactor.

Its subcellular location is the cytoplasm. The enzyme catalyses NAD(+) + ATP = ADP + NADP(+) + H(+). Its function is as follows. Involved in the regulation of the intracellular balance of NAD and NADP, and is a key enzyme in the biosynthesis of NADP. Catalyzes specifically the phosphorylation on 2'-hydroxyl of the adenosine moiety of NAD to yield NADP. This chain is NAD kinase, found in Shewanella loihica (strain ATCC BAA-1088 / PV-4).